The chain runs to 46 residues: Protein PsbN (46 aa).

Residues 10–30 traverse the membrane as a helical segment; the sequence is LAIIVLVVLLGLTGLGVYMAF.

It belongs to the PsbN family.

Its subcellular location is the cellular thylakoid membrane. Its function is as follows. May play a role in photosystem I and II biogenesis. In Prochlorococcus marinus (strain MIT 9211), this protein is Protein PsbN.